The chain runs to 120 residues: Large ribosomal subunit protein uL18 (120 aa).

The protein belongs to the universal ribosomal protein uL18 family. Part of the 50S ribosomal subunit; part of the 5S rRNA/L5/L18/L25 subcomplex. Contacts the 5S and 23S rRNAs.

This is one of the proteins that bind and probably mediate the attachment of the 5S RNA into the large ribosomal subunit, where it forms part of the central protuberance. In Geobacillus sp. (strain WCH70), this protein is Large ribosomal subunit protein uL18.